Here is a 255-residue protein sequence, read N- to C-terminus: Homeobox protein Hox-D4 (255 aa).

Residues 31 to 127 (EQGADYYGGG…PKQPPSGTAL (97 aa)) form a disordered region. Positions 94–107 (EPCPAPPAPPPAPL) are enriched in pro residues. The short motif at 133 to 138 (VYPWMK) is the Antp-type hexapeptide element. Residues 154–213 (PKRSRTAYTRQQVLELEKEFHFNRYLTRRRRIEIAHTLCLSERQIKIWFQNRRMKWKKDH) constitute a DNA-binding region (homeobox). A disordered region spans residues 212 to 255 (DHKLPNTKGRSSSSSSSSSCSSSVAPSQHLQPMAKDHHTDLTTL). Low complexity predominate over residues 222 to 234 (SSSSSSSSSCSSS). Positions 245–255 (AKDHHTDLTTL) are enriched in basic and acidic residues.

This sequence belongs to the Antp homeobox family. Deformed subfamily. Forms a DNA-binding heterodimer with transcription factor PBX1.

Its subcellular location is the nucleus. Functionally, sequence-specific transcription factor which is part of a developmental regulatory system that provides cells with specific positional identities on the anterior-posterior axis. This Homo sapiens (Human) protein is Homeobox protein Hox-D4 (HOXD4).